The chain runs to 140 residues: uncharacterized protein (140 aa).

This is an uncharacterized protein from Archaeoglobus fulgidus (strain ATCC 49558 / DSM 4304 / JCM 9628 / NBRC 100126 / VC-16).